Reading from the N-terminus, the 116-residue chain is Large ribosomal subunit protein bL19 (116 aa).

It belongs to the bacterial ribosomal protein bL19 family.

This protein is located at the 30S-50S ribosomal subunit interface and may play a role in the structure and function of the aminoacyl-tRNA binding site. The sequence is that of Large ribosomal subunit protein bL19 from Pseudomonas aeruginosa (strain LESB58).